Reading from the N-terminus, the 324-residue chain is Beta-ketoacyl-[acyl-carrier-protein] synthase III (324 aa).

Catalysis depends on residues Cys112 and His249. Residues 250-254 form an ACP-binding region; it reads QANRR. Residue Asn279 is part of the active site.

It belongs to the thiolase-like superfamily. FabH family. In terms of assembly, homodimer.

The protein localises to the cytoplasm. The catalysed reaction is malonyl-[ACP] + acetyl-CoA + H(+) = 3-oxobutanoyl-[ACP] + CO2 + CoA. It participates in lipid metabolism; fatty acid biosynthesis. Functionally, catalyzes the condensation reaction of fatty acid synthesis by the addition to an acyl acceptor of two carbons from malonyl-ACP. Catalyzes the first condensation reaction which initiates fatty acid synthesis and may therefore play a role in governing the total rate of fatty acid production. Possesses both acetoacetyl-ACP synthase and acetyl transacylase activities. Its substrate specificity determines the biosynthesis of branched-chain and/or straight-chain of fatty acids. This chain is Beta-ketoacyl-[acyl-carrier-protein] synthase III, found in Streptococcus pyogenes serotype M49 (strain NZ131).